Here is a 382-residue protein sequence, read N- to C-terminus: Glutaminyl-peptide cyclotransferase-like protein (382 aa).

The chain crosses the membrane as a helical span at residues 35–55 (LLPLLLALAVGSAFYTIWSGW). Cys167 and Cys191 are disulfide-bonded. Asp186 lines the Zn(2+) pocket. Glu225 serves as the catalytic Proton acceptor. Glu226 serves as a coordination point for Zn(2+). The active-site Proton acceptor is Asp269. His351 lines the Zn(2+) pocket.

Belongs to the glutaminyl-peptide cyclotransferase family.

It localises to the golgi apparatus membrane. The catalysed reaction is N-terminal L-glutaminyl-[peptide] = N-terminal 5-oxo-L-prolyl-[peptide] + NH4(+). In terms of biological role, responsible for the biosynthesis of pyroglutamyl peptides. This Macaca fascicularis (Crab-eating macaque) protein is Glutaminyl-peptide cyclotransferase-like protein (QPCTL).